The primary structure comprises 119 residues: NAD(P)H-quinone oxidoreductase subunit M (119 aa).

It belongs to the complex I NdhM subunit family. NDH-1 can be composed of about 15 different subunits; different subcomplexes with different compositions have been identified which probably have different functions.

The protein resides in the cellular thylakoid membrane. It carries out the reaction a plastoquinone + NADH + (n+1) H(+)(in) = a plastoquinol + NAD(+) + n H(+)(out). The catalysed reaction is a plastoquinone + NADPH + (n+1) H(+)(in) = a plastoquinol + NADP(+) + n H(+)(out). Functionally, NDH-1 shuttles electrons from an unknown electron donor, via FMN and iron-sulfur (Fe-S) centers, to quinones in the respiratory and/or the photosynthetic chain. The immediate electron acceptor for the enzyme in this species is believed to be plastoquinone. Couples the redox reaction to proton translocation, and thus conserves the redox energy in a proton gradient. Cyanobacterial NDH-1 also plays a role in inorganic carbon-concentration. In Crocosphaera subtropica (strain ATCC 51142 / BH68) (Cyanothece sp. (strain ATCC 51142)), this protein is NAD(P)H-quinone oxidoreductase subunit M.